The sequence spans 291 residues: Ribosome maturation factor RimP (291 aa).

The segment at 188 to 291 is disordered; the sequence is ERGLGEDEEF…GGKPKAKETH (104 aa). Residues 193 to 211 are compositionally biased toward acidic residues; sequence EDEEFEDDADEVFEGDEAD. Basic and acidic residues-rich tracts occupy residues 212–237 and 245–254; these read EKAA…EKRA and AKSEKAEKSQ.

The protein belongs to the RimP family.

It localises to the cytoplasm. In terms of biological role, required for maturation of 30S ribosomal subunits. This chain is Ribosome maturation factor RimP, found in Azorhizobium caulinodans (strain ATCC 43989 / DSM 5975 / JCM 20966 / LMG 6465 / NBRC 14845 / NCIMB 13405 / ORS 571).